The primary structure comprises 28 residues: uncharacterized protein (28 aa).

Positions 1-18 (MLPRKYKPAYKKQAHRVK) are enriched in basic residues. Residues 1 to 28 (MLPRKYKPAYKKQAHRVKSNPQPAYTFQ) are disordered. Residues 19–28 (SNPQPAYTFQ) show a composition bias toward polar residues.

This is an uncharacterized protein from Saccharomyces cerevisiae (strain ATCC 204508 / S288c) (Baker's yeast).